Reading from the N-terminus, the 962-residue chain is Translation initiation factor IF-2 (962 aa).

A disordered region spans residues 99 to 365 (VKAAQTQAAP…GKKGKKLKLE (267 aa)). The span at 117 to 141 (DAAKARAEAAARAEARAKAEAEAAK) shows a compositional bias: basic and acidic residues. The segment covering 145 to 155 (AKAGNKAKPAA) has biased composition (low complexity). The segment covering 173 to 216 (KPAEESKAEKAQADKMPSKKPAEPKEKAAKPKHERNGKGKDAKK) has biased composition (basic and acidic residues). The segment covering 219-234 (KPAAPAVPQPVVSAEE) has biased composition (low complexity). Residues 235 to 269 (QAQRDEEARRAAALRAHQEALLKEKQERQARREAM) show a composition bias toward basic and acidic residues. Residues 270–283 (KQQAEQQAKAAQEA) show a composition bias toward low complexity. Residues 338 to 354 (GGRDRNNARNGDDERVR) show a composition bias toward basic and acidic residues. In terms of domain architecture, tr-type G spans 462-631 (PRPPVVTVMG…LLEAEVLELT (170 aa)). The G1 stretch occupies residues 471 to 478 (GHVDHGKT). Position 471–478 (471–478 (GHVDHGKT)) interacts with GTP. Residues 496 to 500 (GITQH) are G2. The segment at 517–520 (DTPG) is G3. Residues 517 to 521 (DTPGH) and 571 to 574 (NKID) each bind GTP. The segment at 571–574 (NKID) is G4. The interval 607–609 (SAK) is G5.

This sequence belongs to the TRAFAC class translation factor GTPase superfamily. Classic translation factor GTPase family. IF-2 subfamily.

The protein localises to the cytoplasm. One of the essential components for the initiation of protein synthesis. Protects formylmethionyl-tRNA from spontaneous hydrolysis and promotes its binding to the 30S ribosomal subunits. Also involved in the hydrolysis of GTP during the formation of the 70S ribosomal complex. This chain is Translation initiation factor IF-2, found in Neisseria meningitidis serogroup C (strain 053442).